Consider the following 545-residue polypeptide: CTP synthase (545 aa).

The amidoligase domain stretch occupies residues 1–266; it reads MTTNYIFVTG…DDYICKRFSL (266 aa). Residue Ser14 coordinates CTP. Ser14 serves as a coordination point for UTP. ATP-binding positions include 15–20 and Asp72; that span reads SLGKGI. Asp72 and Glu140 together coordinate Mg(2+). CTP contacts are provided by residues 147 to 149, 187 to 192, and Lys223; these read DIE and KTKPTQ. Residues 187–192 and Lys223 contribute to the UTP site; that span reads KTKPTQ. 239–241 provides a ligand contact to ATP; the sequence is KDV. The 252-residue stretch at 291–542 folds into the Glutamine amidotransferase type-1 domain; that stretch reads TIGMVGKYIE…VKAANEHQKR (252 aa). L-glutamine is bound at residue Gly352. Cys379 (nucleophile; for glutamine hydrolysis) is an active-site residue. L-glutamine is bound by residues 380 to 383, Glu403, and Arg470; that span reads LGMQ. Active-site residues include His515 and Glu517.

This sequence belongs to the CTP synthase family. Homotetramer.

It catalyses the reaction UTP + L-glutamine + ATP + H2O = CTP + L-glutamate + ADP + phosphate + 2 H(+). It carries out the reaction L-glutamine + H2O = L-glutamate + NH4(+). The enzyme catalyses UTP + NH4(+) + ATP = CTP + ADP + phosphate + 2 H(+). The protein operates within pyrimidine metabolism; CTP biosynthesis via de novo pathway; CTP from UDP: step 2/2. Its activity is regulated as follows. Allosterically activated by GTP, when glutamine is the substrate; GTP has no effect on the reaction when ammonia is the substrate. The allosteric effector GTP functions by stabilizing the protein conformation that binds the tetrahedral intermediate(s) formed during glutamine hydrolysis. Inhibited by the product CTP, via allosteric rather than competitive inhibition. In terms of biological role, catalyzes the ATP-dependent amination of UTP to CTP with either L-glutamine or ammonia as the source of nitrogen. Regulates intracellular CTP levels through interactions with the four ribonucleotide triphosphates. The protein is CTP synthase of Salmonella paratyphi A (strain ATCC 9150 / SARB42).